A 338-amino-acid polypeptide reads, in one-letter code: Ornithine carbamoyltransferase (338 aa).

Carbamoyl phosphate is bound by residues 56-59, Arg107, and 134-137; these read STRT and HPTQ. L-ornithine-binding positions include Asn168, Asp232, and 236–237; that span reads SM. Carbamoyl phosphate contacts are provided by residues 274 to 275 and Arg320; that span reads CL.

Belongs to the aspartate/ornithine carbamoyltransferase superfamily. OTCase family.

The protein resides in the cytoplasm. The catalysed reaction is carbamoyl phosphate + L-ornithine = L-citrulline + phosphate + H(+). Its pathway is amino-acid biosynthesis; L-arginine biosynthesis; L-arginine from L-ornithine and carbamoyl phosphate: step 1/3. In terms of biological role, reversibly catalyzes the transfer of the carbamoyl group from carbamoyl phosphate (CP) to the N(epsilon) atom of ornithine (ORN) to produce L-citrulline. This is Ornithine carbamoyltransferase (argI) from Buchnera aphidicola subsp. Acyrthosiphon pisum (strain APS) (Acyrthosiphon pisum symbiotic bacterium).